Reading from the N-terminus, the 594-residue chain is Dual specificity protein phosphatase CDC14A (594 aa).

The interval 7–162 (ELIGACEFMK…GLQHGFFDFE (156 aa)) is a. Positions 163–176 (TFDVDEYEHYERVE) are linker. The segment at 177 to 343 (NGDFNWIVPG…QGDIFRSKLK (167 aa)) is b. In terms of domain architecture, Tyrosine-protein phosphatase spans 179–336 (DFNWIVPGKF…KQASLWVQGD (158 aa)). Catalysis depends on cysteine 278, which acts as the Phosphocysteine intermediate. The disordered stretch occupies residues 396-435 (GDKLRALKSQRQPRTSPSCAFRSDDTKGHPRAVSQPFRLS). The span at 404-413 (SQRQPRTSPS) shows a compositional bias: polar residues. Serine 484 carries the post-translational modification Phosphoserine. Positions 487 to 560 (NLNAATDDPE…PGPHSAKTEE (74 aa)) are disordered. Over residues 500–531 (TSSSSKAGFTASPFTNLLNGSSQPTTRNYPEL) the composition is skewed to polar residues. Positions 532–549 (NNNQYNRSSNSNGGNLNS) are enriched in low complexity. Phosphoserine is present on serine 583.

Belongs to the protein-tyrosine phosphatase family. Non-receptor class CDC14 subfamily. In terms of assembly, interacts with KIF20A, which is required to localize CDC14 to the midzone of the mitotic spindle.

Its subcellular location is the nucleus. It localises to the cytoplasm. The protein localises to the cytoskeleton. It is found in the microtubule organizing center. The protein resides in the centrosome. Its subcellular location is the spindle pole. It localises to the spindle. The protein localises to the cell projection. It is found in the kinocilium. The protein resides in the stereocilium. It catalyses the reaction O-phospho-L-tyrosyl-[protein] + H2O = L-tyrosyl-[protein] + phosphate. It carries out the reaction O-phospho-L-seryl-[protein] + H2O = L-seryl-[protein] + phosphate. The enzyme catalyses O-phospho-L-threonyl-[protein] + H2O = L-threonyl-[protein] + phosphate. Dual-specificity phosphatase. Required for centrosome separation and productive cytokinesis during cell division. Dephosphorylates SIRT2 around early anaphase. May dephosphorylate the APC subunit FZR1/CDH1, thereby promoting APC-FZR1 dependent degradation of mitotic cyclins and subsequent exit from mitosis. Required for normal hearing. This Homo sapiens (Human) protein is Dual specificity protein phosphatase CDC14A (CDC14A).